Consider the following 976-residue polypeptide: Vacuolar membrane protease (976 aa).

At 1–15 (MKLKSVFRSVLKYRK) the chain is on the cytoplasmic side. Residues 16 to 36 (TNLSLLLLITYSIITLLYIFD) traverse the membrane as a helical segment. Residues 37–359 (HERYKLNLPK…KFFVISAKTL (323 aa)) are Vacuolar-facing. N-linked (GlcNAc...) asparagine glycans are attached at residues Asn96 and Asn121. His156 and Asp168 together coordinate Zn(2+). Residue Asn189 is glycosylated (N-linked (GlcNAc...) asparagine). Glu200 serves as the catalytic Proton acceptor. Glu201 contributes to the Zn(2+) binding site. Residues Asn212 and Asn217 are each glycosylated (N-linked (GlcNAc...) asparagine). The Zn(2+) site is built by Glu226 and His300. Residues 360–380 (FYWNCIFLLVSPVVAIGLYLI) traverse the membrane as a helical segment. Over 381 to 392 (SRDRMTWKSHSW) the chain is Cytoplasmic. The helical transmembrane segment at 393-412 (LSWTRFPLSLAAGIIVQKLF) threads the bilayer. Over 413–428 (SNDIIRSNPLTFSRNY) the chain is Vacuolar. Residues 429–449 (FWPISAFFTQVIFTSYVLINC) traverse the membrane as a helical segment. Over 450–461 (SNFFFPCADMKS) the chain is Cytoplasmic. Residues 462 to 482 (LSIIELFIILWTILLFTSKLL) traverse the membrane as a helical segment. Residues 483-496 (YSSDYRYTGLYPLS) are Vacuolar-facing. Residues 497–517 (IFFLLSTIAAILRLLALALGM) form a helical membrane-spanning segment. Residues 518 to 627 (RTRKRLGREC…NSLKLEYTDY (110 aa)) are Cytoplasmic-facing. Residues 528–610 (RDHHSNYSSH…PLLKGSNSME (83 aa)) form a disordered region. Positions 549–558 (NLEQPQDQFT) are enriched in polar residues. Residues 559–570 (SSQDDQASIQDD) are compositionally biased toward low complexity. A compositionally biased stretch (basic and acidic residues) spans 582–601 (NVDEDHGMDSSSQQHDERVP). The helical transmembrane segment at 628–648 (AWIIQFLLIVPIPSFILFNSV) threads the bilayer. The Vacuolar portion of the chain corresponds to 649 to 668 (DVIMDALNHTVQEGSKATFD). Asn656 carries an N-linked (GlcNAc...) asparagine glycan. A helical membrane pass occupies residues 669-689 (VLRFGMVGSILMALPILPFFY). The Cytoplasmic segment spans residues 690–692 (KVN). Residues 693–713 (YITISLTALLFLISASKTLLV) form a helical membrane-spanning segment. Topologically, residues 714–976 (HPFTNSNPLK…LVIVKDAIIL (263 aa)) are vacuolar. Asn768, Asn796, Asn811, Asn866, and Asn937 each carry an N-linked (GlcNAc...) asparagine glycan.

This sequence belongs to the peptidase M28 family. Requires Zn(2+) as cofactor.

The protein localises to the vacuole membrane. In terms of biological role, may be involved in vacuolar sorting and osmoregulation. This is Vacuolar membrane protease from Saccharomyces cerevisiae (strain YJM789) (Baker's yeast).